We begin with the raw amino-acid sequence, 325 residues long: Putative S-adenosyl-L-methionine-dependent methyltransferase MT0917 (325 aa).

Residues aspartate 126 and 155–156 (DL) each bind S-adenosyl-L-methionine.

This sequence belongs to the UPF0677 family.

Its function is as follows. Exhibits S-adenosyl-L-methionine-dependent methyltransferase activity. This Mycobacterium tuberculosis (strain CDC 1551 / Oshkosh) protein is Putative S-adenosyl-L-methionine-dependent methyltransferase MT0917.